A 1405-amino-acid polypeptide reads, in one-letter code: ATP-dependent helicase/nuclease subunit A (1405 aa).

Positions 7–482 constitute a UvrD-like helicase ATP-binding domain; that stretch reads REWTPDQLAA…ILLKANFRSR (476 aa). 28 to 35 provides a ligand contact to ATP; the sequence is AAAGAGKT. A UvrD-like helicase C-terminal domain is found at 551-914; that stretch reads PEAVGAGKGG…RVMSIHRAKG (364 aa). Disordered stretches follow at residues 778-797 and 1132-1165; these read QEPW…KAVP and AGKT…QDET. Residues 787–796 are compositionally biased toward low complexity; it reads GPGAAAGKAV.

It belongs to the helicase family. AddA subfamily. Heterodimer of AddA and AddB/RexB. It depends on Mg(2+) as a cofactor.

The catalysed reaction is Couples ATP hydrolysis with the unwinding of duplex DNA by translocating in the 3'-5' direction.. The enzyme catalyses ATP + H2O = ADP + phosphate + H(+). Functionally, the heterodimer acts as both an ATP-dependent DNA helicase and an ATP-dependent, dual-direction single-stranded exonuclease. Recognizes the chi site generating a DNA molecule suitable for the initiation of homologous recombination. The AddA nuclease domain is required for chi fragment generation; this subunit has the helicase and 3' -&gt; 5' nuclease activities. In Moorella thermoacetica (strain ATCC 39073 / JCM 9320), this protein is ATP-dependent helicase/nuclease subunit A.